The sequence spans 112 residues: Colipase (112 aa).

A signal peptide spans 1-17; it reads MEKILVLLLVALAVVYA. Residues 18–22 constitute a propeptide, enterostatin, activation peptide; sequence VPDPR. 5 disulfides stabilise this stretch: C34–C45, C40–C56, C44–C78, C66–C86, and C80–C104.

This sequence belongs to the colipase family. In terms of assembly, forms a 1:1 stoichiometric complex with pancreatic lipase. In terms of tissue distribution, expressed by the pancreas.

Its subcellular location is the secreted. Functionally, colipase is a cofactor of pancreatic lipase. It allows the lipase to anchor itself to the lipid-water interface. Without colipase the enzyme is washed off by bile salts, which have an inhibitory effect on the lipase. Its function is as follows. Enterostatin has a biological activity as a satiety signal. The chain is Colipase (CLPS) from Canis lupus familiaris (Dog).